The sequence spans 81 residues: Small ribosomal subunit protein bS16 (81 aa).

Belongs to the bacterial ribosomal protein bS16 family.

The sequence is that of Small ribosomal subunit protein bS16 from Coprothermobacter proteolyticus (strain ATCC 35245 / DSM 5265 / OCM 4 / BT).